A 158-amino-acid polypeptide reads, in one-letter code: NADPH-dependent 7-cyano-7-deazaguanine reductase (158 aa).

The active-site Thioimide intermediate is C56. The active-site Proton donor is the D63. Residues 78 to 80 and 97 to 98 contribute to the substrate site; these read LES and HE.

This sequence belongs to the GTP cyclohydrolase I family. QueF type 1 subfamily.

The protein localises to the cytoplasm. It carries out the reaction 7-aminomethyl-7-carbaguanine + 2 NADP(+) = 7-cyano-7-deazaguanine + 2 NADPH + 3 H(+). The protein operates within tRNA modification; tRNA-queuosine biosynthesis. Its function is as follows. Catalyzes the NADPH-dependent reduction of 7-cyano-7-deazaguanine (preQ0) to 7-aminomethyl-7-deazaguanine (preQ1). The polypeptide is NADPH-dependent 7-cyano-7-deazaguanine reductase (Rhodopseudomonas palustris (strain TIE-1)).